Here is a 778-residue protein sequence, read N- to C-terminus: Probable protein kinase DDB_G0291133 (778 aa).

A disordered region spans residues 129–162 (LSINNNNNNNNNNGGYKIPSSVNKNSNNYNSNSN). The region spanning 177 to 462 (FDVVCKLGSG…LDQILLNENI (286 aa)) is the Protein kinase domain. Residues 183 to 191 (LGSGSFSDV) and Lys-206 contribute to the ATP site. Asp-303 (proton acceptor) is an active-site residue. 2 residues coordinate Mg(2+): Asn-308 and Asp-321. Disordered stretches follow at residues 478 to 509 (NIENDNNNNNNTDNNNNNNTDNINNDNNDDNN), 562 to 697 (HFVR…GFYG), and 757 to 778 (SHPQESDKMSPRNLLSLFQETN). Acidic residues predominate over residues 578-590 (SDEEEDDDDDDDS). Low complexity predominate over residues 599 to 651 (SLNNLNNSSSNIGISESNSNNSFSSILEENNESSSSSPLPSLSFSRRLSTSSL). Residues 652-670 (VTTISPKPNFNTSGNKLFS) are compositionally biased toward polar residues. Positions 671–693 (NENNNSNNNNNNNNNNQNNNNNN) are enriched in low complexity. The span at 757–766 (SHPQESDKMS) shows a compositional bias: basic and acidic residues.

The protein belongs to the protein kinase superfamily. Ser/Thr protein kinase family. WEE1 subfamily.

The catalysed reaction is L-seryl-[protein] + ATP = O-phospho-L-seryl-[protein] + ADP + H(+). The enzyme catalyses L-threonyl-[protein] + ATP = O-phospho-L-threonyl-[protein] + ADP + H(+). The chain is Probable protein kinase DDB_G0291133 from Dictyostelium discoideum (Social amoeba).